Consider the following 353-residue polypeptide: Virulence plasmid protein pGP2-D (353 aa).

In Chlamydia muridarum (strain MoPn / Nigg), this protein is Virulence plasmid protein pGP2-D.